The sequence spans 147 residues: MRLHDVKPQKGSKKRKKRVARGISAGQGASAGLGMRGQKSRSGSGTRPGFEGGQQPLYRRLPKLKGFPIVNQKIYTTINVEKLASLPANTEVTLASLKAAGILTAVKGPLKILGNGELSTPLKVQAAAFTGTARSKIEAAGGSCEVL.

Residues 1-57 (MRLHDVKPQKGSKKRKKRVARGISAGQGASAGLGMRGQKSRSGSGTRPGFEGGQQPL) are disordered. Residues 10–20 (KGSKKRKKRVA) are compositionally biased toward basic residues.

This sequence belongs to the universal ribosomal protein uL15 family. In terms of assembly, part of the 50S ribosomal subunit.

Its function is as follows. Binds to the 23S rRNA. The sequence is that of Large ribosomal subunit protein uL15 from Nostoc punctiforme (strain ATCC 29133 / PCC 73102).